The sequence spans 354 residues: MEQNWFFPPHQGIRLGDLANQIGAELLDISAADRTVRAVAPVYRAKPGDICYMLSRKNREELQTCRAAAIICDKAISSLVPDTIPVLLTSKPHTAFALAGTLLHERAMRPSYNTSERGVAPEAFVDPTARLEAGVEVEPMAVIGAGAEIGSGTRIAAGAMIGQGVRIGRDCTISAGASILCALIGNNVIIHPGARIGQDGFGYAPGPKGGMIKIVQVGRVIIQDHVEIGANTTIDRGTMDDTVIGEGTKIDNLVQIGHNVRIGRYCGIVSQVGIAGSTQIGDGVMIGGGVGVNGHITIGDGAQIAAMSGVASDVPAGERYGGIPARPMRDFLRDVAEMALRSSERQKKKGGKDE.

Residue histidine 258 is the Proton acceptor of the active site.

The protein belongs to the transferase hexapeptide repeat family. LpxD subfamily. Homotrimer.

The catalysed reaction is a UDP-3-O-[(3R)-3-hydroxyacyl]-alpha-D-glucosamine + a (3R)-hydroxyacyl-[ACP] = a UDP-2-N,3-O-bis[(3R)-3-hydroxyacyl]-alpha-D-glucosamine + holo-[ACP] + H(+). It functions in the pathway bacterial outer membrane biogenesis; LPS lipid A biosynthesis. Functionally, catalyzes the N-acylation of UDP-3-O-acylglucosamine using 3-hydroxyacyl-ACP as the acyl donor. Is involved in the biosynthesis of lipid A, a phosphorylated glycolipid that anchors the lipopolysaccharide to the outer membrane of the cell. In Rhizobium meliloti (strain 1021) (Ensifer meliloti), this protein is UDP-3-O-acylglucosamine N-acyltransferase.